The primary structure comprises 223 residues: 2-C-methyl-D-erythritol 4-phosphate cytidylyltransferase (223 aa).

Belongs to the IspD/TarI cytidylyltransferase family. IspD subfamily.

It catalyses the reaction 2-C-methyl-D-erythritol 4-phosphate + CTP + H(+) = 4-CDP-2-C-methyl-D-erythritol + diphosphate. The protein operates within isoprenoid biosynthesis; isopentenyl diphosphate biosynthesis via DXP pathway; isopentenyl diphosphate from 1-deoxy-D-xylulose 5-phosphate: step 2/6. Functionally, catalyzes the formation of 4-diphosphocytidyl-2-C-methyl-D-erythritol from CTP and 2-C-methyl-D-erythritol 4-phosphate (MEP). In Synechococcus sp. (strain WH7803), this protein is 2-C-methyl-D-erythritol 4-phosphate cytidylyltransferase.